A 758-amino-acid polypeptide reads, in one-letter code: Morphogenetic regulator of filamentous growth protein 1 (758 aa).

Residues 1 to 10 (MNGNNNTGNL) show a composition bias toward polar residues. Disordered stretches follow at residues 1 to 49 (MNGN…GNNA), 87 to 293 (AAAA…VSGR), 408 to 433 (NKAT…NKPH), and 650 to 758 (NFSG…KRRK). Residues 11–31 (QQSHGPPQQQQQQQMFNQTPQ) are compositionally biased toward low complexity. Over residues 100–116 (RNPNYNGSPNPGQTLPL) the composition is skewed to polar residues. The span at 117–128 (NNNNNNSNNNNN) shows a compositional bias: low complexity. Residues 142–168 (MPSSNLQPTSSAGNSRGHTPRMVNQPQ) show a composition bias toward polar residues. Positions 183-210 (QQQQQQQQQQQQPTPQLPPQGQTPQQVQ) are enriched in low complexity. Polar residues-rich tracts occupy residues 218 to 229 (NNGNLVANQSLK) and 249 to 261 (PNSS…QTQF). Composition is skewed to low complexity over residues 264-288 (PPNS…NPQP) and 408-430 (NKAT…NNNN). Polar residues predominate over residues 650–665 (NFSGSTNLQTDAQRSR). Residues 666 to 715 (QQQQQQQQQQQQQQQQQSLNTSNNNSNSNNSNNNNNNNSNNNNNNNNNNN) are compositionally biased toward low complexity. Residues 722-734 (NGSNNISSPSPRT) show a composition bias toward polar residues.

This sequence belongs to the MFG1 family. In terms of assembly, interacts with FLO8 and MSS11, both morphogenetic transcription factors binding directly to the FLO11 promoter.

It is found in the nucleus. Functionally, transcriptional regulator with a general role in all morphogenetically distinct forms of filamentous growth, namely invasive growth and biofilm formation. May control FLO11 gene expression as part of a promoter-bound complex with FLO8 and MSS1. Important for virulence. The sequence is that of Morphogenetic regulator of filamentous growth protein 1 (MFG1) from Candida albicans (strain SC5314 / ATCC MYA-2876) (Yeast).